The primary structure comprises 64 residues: uncharacterized protein (64 aa).

This is an uncharacterized protein from Mycoplasma (Bacteriophage L2).